Consider the following 205-residue polypeptide: UPF0548 protein At2g17695 (205 aa).

The protein belongs to the UPF0548 family.

This Arabidopsis thaliana (Mouse-ear cress) protein is UPF0548 protein At2g17695.